Consider the following 695-residue polypeptide: Lupanine 17-hydroxylase [cytochrome c] (695 aa).

An N-terminal signal peptide occupies residues 1-26 (MSANKNIWIIRLGVAFVCVAIGAAQA). A Cytochrome c domain is found at 598–677 (AMAESGRHIF…ALQAFILQKA (80 aa)). Heme c is bound by residues Cys612, Cys615, and His616.

Belongs to the bacterial PQQ dehydrogenase family. Monomer. It depends on pyrroloquinoline quinone as a cofactor. Requires heme c as cofactor.

It localises to the periplasm. It carries out the reaction lupanine + 2 Fe(III)-[cytochrome c] + H2O = 17-hydroxylupanine + 2 Fe(II)-[cytochrome c] + 2 H(+). Functionally, catalyzes the first reaction in the catabolism of the alkaloid lupanine. It dehydrogenates lupanine, which can then be hydrated to produce 17-hydroxylupanine. The protein is Lupanine 17-hydroxylase [cytochrome c] (luh) of Pseudomonas sp.